A 556-amino-acid chain; its full sequence is Phenylalanine--tRNA ligase beta subunit (556 aa).

One can recognise a B5 domain in the interval 278-353 (LTPKRFEVEL…IAYGYNNIEP (76 aa)). Mg(2+) contacts are provided by Asp331, Asp337, Glu340, and Asp341.

It belongs to the phenylalanyl-tRNA synthetase beta subunit family. Type 2 subfamily. As to quaternary structure, tetramer of two alpha and two beta subunits. It depends on Mg(2+) as a cofactor.

Its subcellular location is the cytoplasm. The catalysed reaction is tRNA(Phe) + L-phenylalanine + ATP = L-phenylalanyl-tRNA(Phe) + AMP + diphosphate + H(+). In Pyrococcus abyssi (strain GE5 / Orsay), this protein is Phenylalanine--tRNA ligase beta subunit.